Consider the following 943-residue polypeptide: Translation initiation factor IF-2 (943 aa).

The segment at 29-349 (LSVKSHSSSV…NNRGNSAPKL (321 aa)) is disordered. Composition is skewed to basic and acidic residues over residues 69–82 (PKEE…DKAS), 112–137 (FKAE…DNRN), 145–155 (QGKRHNNDRRN), 163–196 (DHNK…RDNA), and 224–253 (RQSE…EKQQ). Residues 254-266 (AEVAVQKAAAETK) show a composition bias toward low complexity. Basic and acidic residues predominate over residues 296 to 309 (KSRDNHRVNEDGPK). Low complexity predominate over residues 313-332 (NNKWNNQNQVRNQRNSNWNK). A tr-type G domain is found at 445 to 614 (ERAPVVTIMG…LLVAEVEELK (170 aa)). A G1 region spans residues 454–461 (GHVDHGKT). 454–461 (GHVDHGKT) lines the GTP pocket. Positions 479–483 (GITQH) are G2. The segment at 500-503 (DTPG) is G3. Residues 500 to 504 (DTPGH) and 554 to 557 (NKID) each bind GTP. The interval 554 to 557 (NKID) is G4. Residues 590–592 (SAK) form a G5 region.

It belongs to the TRAFAC class translation factor GTPase superfamily. Classic translation factor GTPase family. IF-2 subfamily.

Its subcellular location is the cytoplasm. Functionally, one of the essential components for the initiation of protein synthesis. Protects formylmethionyl-tRNA from spontaneous hydrolysis and promotes its binding to the 30S ribosomal subunits. Also involved in the hydrolysis of GTP during the formation of the 70S ribosomal complex. The polypeptide is Translation initiation factor IF-2 (Streptococcus thermophilus (strain ATCC BAA-491 / LMD-9)).